Reading from the N-terminus, the 682-residue chain is DNA-directed RNA polymerase subunit beta' (682 aa).

Zn(2+) is bound by residues cysteine 69, cysteine 71, cysteine 87, and cysteine 90. Mg(2+) contacts are provided by aspartate 489, aspartate 491, and aspartate 493.

This sequence belongs to the RNA polymerase beta' chain family. RpoC1 subfamily. In terms of assembly, in plastids the minimal PEP RNA polymerase catalytic core is composed of four subunits: alpha, beta, beta', and beta''. When a (nuclear-encoded) sigma factor is associated with the core the holoenzyme is formed, which can initiate transcription. It depends on Mg(2+) as a cofactor. The cofactor is Zn(2+).

The protein localises to the plastid. It is found in the chloroplast. The catalysed reaction is RNA(n) + a ribonucleoside 5'-triphosphate = RNA(n+1) + diphosphate. Functionally, DNA-dependent RNA polymerase catalyzes the transcription of DNA into RNA using the four ribonucleoside triphosphates as substrates. The chain is DNA-directed RNA polymerase subunit beta' from Agrostis stolonifera (Creeping bentgrass).